The following is a 187-amino-acid chain: Elongation factor P (187 aa).

Belongs to the elongation factor P family.

The protein localises to the cytoplasm. Its pathway is protein biosynthesis; polypeptide chain elongation. Functionally, involved in peptide bond synthesis. Stimulates efficient translation and peptide-bond synthesis on native or reconstituted 70S ribosomes in vitro. Probably functions indirectly by altering the affinity of the ribosome for aminoacyl-tRNA, thus increasing their reactivity as acceptors for peptidyl transferase. In Helicobacter pylori (strain P12), this protein is Elongation factor P.